Reading from the N-terminus, the 299-residue chain is tRNA pseudouridine synthase A (299 aa).

D67 (nucleophile) is an active-site residue. Y125 serves as a coordination point for substrate.

This sequence belongs to the tRNA pseudouridine synthase TruA family. Homodimer.

It carries out the reaction uridine(38/39/40) in tRNA = pseudouridine(38/39/40) in tRNA. Functionally, formation of pseudouridine at positions 38, 39 and 40 in the anticodon stem and loop of transfer RNAs. This Parasynechococcus marenigrum (strain WH8102) protein is tRNA pseudouridine synthase A.